Reading from the N-terminus, the 399-residue chain is S-adenosylmethionine synthase (399 aa).

H17 lines the ATP pocket. D19 provides a ligand contact to Mg(2+). Position 52 (E52) interacts with K(+). L-methionine is bound by residues E65 and Q109. A flexible loop region spans residues 109–119 (QSADIAQGVDA). Residues 177–179 (DSK), 243–244 (KF), D252, 258–259 (RK), A275, and K279 each bind ATP. L-methionine is bound at residue D252. L-methionine is bound at residue K283.

The protein belongs to the AdoMet synthase family. As to quaternary structure, homotetramer; dimer of dimers. The cofactor is Mg(2+). It depends on K(+) as a cofactor.

The protein resides in the cytoplasm. It catalyses the reaction L-methionine + ATP + H2O = S-adenosyl-L-methionine + phosphate + diphosphate. It functions in the pathway amino-acid biosynthesis; S-adenosyl-L-methionine biosynthesis; S-adenosyl-L-methionine from L-methionine: step 1/1. Functionally, catalyzes the formation of S-adenosylmethionine (AdoMet) from methionine and ATP. The overall synthetic reaction is composed of two sequential steps, AdoMet formation and the subsequent tripolyphosphate hydrolysis which occurs prior to release of AdoMet from the enzyme. The chain is S-adenosylmethionine synthase from Bradyrhizobium sp. (strain ORS 278).